The following is a 291-amino-acid chain: Oxidative stress-responsive serine-rich protein 1 (291 aa).

The disordered stretch occupies residues 29–139 (ISLSVGEGPS…NAGENSTSLD (111 aa)). Residues 65-83 (STRKSSRGAVRTQRRRRSK) show a composition bias toward basic residues. The segment covering 95–105 (CSTTAPPSSSQ) has biased composition (polar residues). The residue at position 143 (T143) is a Phosphothreonine.

The sequence is that of Oxidative stress-responsive serine-rich protein 1 (Oser1) from Mus musculus (Mouse).